We begin with the raw amino-acid sequence, 4743 residues long: Apolipoprotein B-100 (4743 aa).

Residues 1 to 27 (MGPQRPALRAPLLLLFLLLFLDTSVWA) form the signal peptide. The segment at 29 to 113 (DATRFKHLRK…KNSEEFASAM (85 aa)) is heparin-binding. Residues 33–660 (FKHLRKYVYS…PSSYLPKESM (628 aa)) enclose the Vitellogenin domain. Cysteine 65 and cysteine 84 are joined by a disulfide. Residue asparagine 172 is glycosylated (N-linked (GlcNAc...) asparagine). Intrachain disulfides connect cysteine 173–cysteine 199, cysteine 232–cysteine 248, cysteine 372–cysteine 377, and cysteine 466–cysteine 501. The segment at 219–293 (VRPLSTLISS…RFFRGGINQV (75 aa)) is heparin-binding. Positions 890–947 (NTNFFHESGLEARVALKAGQLKVIIPSPKRPVKLFSGSNTLHLVSTTKTEVIPPLIEN) are heparin-binding. Cysteine 954 and cysteine 964 are disulfide-bonded. Residues asparagine 971, asparagine 1336, asparagine 1345, and asparagine 1491 are each glycosylated (N-linked (GlcNAc...) asparagine). An N6-acetyllysine modification is found at lysine 1973. At serine 2006 the chain carries Phosphoserine. Residues 2010–2145 (NDAFDEPREF…EKLSQLETYA (136 aa)) form a heparin-binding region. Residues asparagine 2094, asparagine 2522, asparagine 2662, asparagine 2741, asparagine 2791, asparagine 2897, asparagine 2944, and asparagine 3063 are each glycosylated (N-linked (GlcNAc...) asparagine). Residues 3123 to 3198 (FLKTTKQSFD…KIKFDKYKTE (76 aa)) are heparin-binding. A basic (possible receptor binding region) region spans residues 3136-3146 (KAQYKKNRDKH). Residues asparagine 3186, asparagine 3299, and asparagine 3321 are each glycosylated (N-linked (GlcNAc...) asparagine). Residues 3336-3356 (VTDALQYKLEGTSRLMRKKVL) are LDL receptor binding. The heparin-binding stretch occupies residues 3346 to 3479 (GTSRLMRKKV…QEYSGSVANE (134 aa)). A basic (possible receptor binding region) region spans residues 3349–3357 (RLMRKKVLK). 3 N-linked (GlcNAc...) asparagine glycosylation sites follow: asparagine 3428, asparagine 3715, and asparagine 3828. Phosphoserine is present on serine 3981. Position 3985 is a phosphothreonine (threonine 3985). 2 N-linked (GlcNAc...) asparagine glycosylation sites follow: asparagine 4203 and asparagine 4232.

In terms of assembly, interacts with PCSK9. Interacts with MTTP. Interacts with AUP1. Interacts with CIDEB. Palmitoylated; structural requirement for proper assembly of the hydrophobic core of the lipoprotein particle. Detected in intestine and liver (at protein level).

It localises to the cytoplasm. The protein localises to the secreted. The protein resides in the lipid droplet. In terms of biological role, apolipoprotein B is a major protein constituent of chylomicrons (apo B-48), LDL (apo B-100) and VLDL (apo B-100). Apo B-100 functions as a recognition signal for the cellular binding and internalization of LDL particles by the apoB/E receptor. The protein is Apolipoprotein B-100 (Apob) of Rattus norvegicus (Rat).